The following is a 473-amino-acid chain: Ribosomal RNA small subunit methyltransferase F (473 aa).

S-adenosyl-L-methionine-binding positions include 123-129 (AAAPGSK), glutamate 147, aspartate 174, and aspartate 192. The active-site Nucleophile is the cysteine 245.

It belongs to the class I-like SAM-binding methyltransferase superfamily. RsmB/NOP family.

It localises to the cytoplasm. The catalysed reaction is cytidine(1407) in 16S rRNA + S-adenosyl-L-methionine = 5-methylcytidine(1407) in 16S rRNA + S-adenosyl-L-homocysteine + H(+). Functionally, specifically methylates the cytosine at position 1407 (m5C1407) of 16S rRNA. In Vibrio atlanticus (strain LGP32) (Vibrio splendidus (strain Mel32)), this protein is Ribosomal RNA small subunit methyltransferase F.